The chain runs to 157 residues: Histidine-containing phosphotransfer protein 5 (157 aa).

Residue Met-1 is modified to N-acetylmethionine. Residues 41–148 (TPDFVAEVVS…NLEKQILQAG (108 aa)) form the HPt domain. A Phosphohistidine modification is found at His-83.

In terms of assembly, interacts with the B-type response regulators ARR1 and ARR2. Binds to AHK2, AHK3, AHK4 and AHK5. Post-translationally, two-component system major event consists of a His-to-Asp phosphorelay between a sensor histidine kinase (HK) and a response regulator (RR). In plants, the His-to-Asp phosphorelay involves an additional intermediate named Histidine-containing phosphotransfer protein (HPt). This multistep phosphorelay consists of a His-Asp-His-Asp sequential transfer of a phosphate group between first a His and an Asp of the HK protein, followed by the transfer to a conserved His of the HPt protein and finally the transfer to an Asp in the receiver domain of the RR protein. In terms of tissue distribution, expressed in the whole plant.

Its subcellular location is the cytoplasm. The protein resides in the cytosol. It localises to the nucleus. Its function is as follows. Functions as a two-component phosphorelay mediator between cytokinin sensor histidine kinases and response regulators (B-type ARRs). Plays an important role in propagating cytokinin signal transduction through the multistep His-to-Asp phosphorelay. The polypeptide is Histidine-containing phosphotransfer protein 5 (AHP5) (Arabidopsis thaliana (Mouse-ear cress)).